Reading from the N-terminus, the 34-residue chain is MEVNILAFIATALFILVPTAFLLIIYVKTASQND.

A helical transmembrane segment spans residues 5-25 (ILAFIATALFILVPTAFLLII).

It belongs to the PsbM family. PSII is composed of 1 copy each of membrane proteins PsbA, PsbB, PsbC, PsbD, PsbE, PsbF, PsbH, PsbI, PsbJ, PsbK, PsbL, PsbM, PsbT, PsbX, PsbY, PsbZ, Psb30/Ycf12, at least 3 peripheral proteins of the oxygen-evolving complex and a large number of cofactors. It forms dimeric complexes.

It is found in the plastid. Its subcellular location is the chloroplast thylakoid membrane. Its function is as follows. One of the components of the core complex of photosystem II (PSII). PSII is a light-driven water:plastoquinone oxidoreductase that uses light energy to abstract electrons from H(2)O, generating O(2) and a proton gradient subsequently used for ATP formation. It consists of a core antenna complex that captures photons, and an electron transfer chain that converts photonic excitation into a charge separation. This subunit is found at the monomer-monomer interface. The polypeptide is Photosystem II reaction center protein M (Cenchrus americanus (Pearl millet)).